The following is a 353-amino-acid chain: UPF0283 membrane protein YcjF (353 aa).

Transmembrane regions (helical) follow at residues 70-90, 100-120, and 213-233; these read MVMG…VQWT, VALG…GSVV, and ESTL…FIAW.

Belongs to the UPF0283 family.

It is found in the cell inner membrane. The chain is UPF0283 membrane protein YcjF from Shigella sonnei (strain Ss046).